A 446-amino-acid polypeptide reads, in one-letter code: MTRKYFGTDGIRGQVGQGVITPQFFMQLGWAVGKVLAERHADGGGLVLIGKDTRISGYMFESALEAGLIAAGVDVGLLGPMPTPAIAYLTRTFQASAGIVISASHNPFRDNGIKLFNTQGVKLADDVEAAIEHQVDRPMVTAERLGKARRVPDAEGRYIEFCKGTLPWGFSLAGLTVVVDCANGATYNVAPKVFSELGAEVIAISTHPDGENINLNCGSTKLNNLQKQVLESHADIGIAFDGDGDRVQFVDERGEVVDGDQLLFIIAAHKQRHGGGCSGVVGTQMSNFGFELALEALKIPFERAKVGDRYVIEAMNNNGWKLGGESSGHIVCADVTTTGDGIIAALQVLRALNAEAQTLYELKQRMQKMPQVMVNVPVKRKLNLEENDMVQTAIAEAEQRMEGQGRVLLRPSGTEPVIRVMVEGQQHGMVSQLAHELAEVVGRATS.

Residue S104 is the Phosphoserine intermediate of the active site. 4 residues coordinate Mg(2+): S104, D241, D243, and D245. S104 is subject to Phosphoserine.

This sequence belongs to the phosphohexose mutase family. Mg(2+) serves as cofactor. Activated by phosphorylation.

It carries out the reaction alpha-D-glucosamine 1-phosphate = D-glucosamine 6-phosphate. In terms of biological role, catalyzes the conversion of glucosamine-6-phosphate to glucosamine-1-phosphate. In Teredinibacter turnerae (strain ATCC 39867 / T7901), this protein is Phosphoglucosamine mutase.